We begin with the raw amino-acid sequence, 434 residues long: Asparagine--tRNA ligase (434 aa).

This sequence belongs to the class-II aminoacyl-tRNA synthetase family.

It localises to the cytoplasm. The enzyme catalyses tRNA(Asn) + L-asparagine + ATP = L-asparaginyl-tRNA(Asn) + AMP + diphosphate + H(+). This is Asparagine--tRNA ligase (asnS) from Pyrococcus furiosus (strain ATCC 43587 / DSM 3638 / JCM 8422 / Vc1).